Here is a 146-residue protein sequence, read N- to C-terminus: Late protein OPG112 (146 aa).

A helical transmembrane segment spans residues 10-32; that stretch reads LAMTAFFGELNTLDIMALIMSIF.

Belongs to the orthopoxvirus OPG112 family.

The protein resides in the host membrane. It is found in the host cytoplasm. Contributes to the formation of crescents and immature virions (IV). Interacts with phosphatidylinositol-3-phosphate (PI3P) and phosphatidylinositol-4-phosphate (PI4P) lipids in order to form virion membranes. Mechanistically, mediates proper formation of OPG125-hexamers, and hence the honey comb lattice and spherical immature virus. The protein is Late protein OPG112 (OPG112) of Homo sapiens (Human).